The following is a 126-amino-acid chain: Large ribosomal subunit protein bL20c (126 aa).

This sequence belongs to the bacterial ribosomal protein bL20 family.

It localises to the plastid. The protein localises to the chloroplast. In terms of biological role, binds directly to 23S ribosomal RNA and is necessary for the in vitro assembly process of the 50S ribosomal subunit. It is not involved in the protein synthesizing functions of that subunit. The protein is Large ribosomal subunit protein bL20c of Lactuca sativa (Garden lettuce).